A 173-amino-acid chain; its full sequence is Protein TraS (173 aa).

The protein resides in the cell inner membrane. Functionally, involved in surface exclusion. The chain is Protein TraS (traS) from Escherichia coli (strain K12).